Consider the following 437-residue polypeptide: Glutamate-1-semialdehyde 2,1-aminomutase (437 aa).

N6-(pyridoxal phosphate)lysine is present on lysine 272.

This sequence belongs to the class-III pyridoxal-phosphate-dependent aminotransferase family. HemL subfamily. Homodimer. The cofactor is pyridoxal 5'-phosphate.

Its subcellular location is the cytoplasm. The enzyme catalyses (S)-4-amino-5-oxopentanoate = 5-aminolevulinate. It functions in the pathway porphyrin-containing compound metabolism; protoporphyrin-IX biosynthesis; 5-aminolevulinate from L-glutamyl-tRNA(Glu): step 2/2. This chain is Glutamate-1-semialdehyde 2,1-aminomutase, found in Moorella thermoacetica (strain ATCC 39073 / JCM 9320).